We begin with the raw amino-acid sequence, 600 residues long: Melanophilin (600 aa).

The region spanning 4 to 124 (KLDLSKLTDE…IGSLEWYYEH (121 aa)) is the RabBD domain. The FYVE-type zinc finger occupies 64-107 (CARCLQPYQLLVNSKRQCLECGLFTCKSCGRVHPEEQGWICDPC). 4 disordered regions span residues 146–277 (QGGA…AELC), 390–465 (EELT…LSEL), 499–541 (TVKP…AKAM), and 553–600 (NSLK…AHQS). Composition is skewed to basic and acidic residues over residues 232-243 (CSEKAAPHKAEG) and 409-420 (KDEKAEPNRDKS). Positions 373-496 (GVRTEADVEE…ESRIAALRAA (124 aa)) form a coiled coil. Basic and acidic residues predominate over residues 558–569 (QGKDDDSFDRKS).

Binds RAB27A that has been activated by GTP-binding via its N-terminus. Binds MYO5A via its C-terminal coiled coil domain.

Its subcellular location is the cytoplasm. Functionally, rab effector protein involved in melanosome transport. Serves as link between melanosome-bound RAB27A and the motor protein MYO5A. The chain is Melanophilin (MLPH) from Homo sapiens (Human).